Consider the following 481-residue polypeptide: Glutamyl-tRNA(Gln) amidotransferase subunit A (481 aa).

Residues Lys-75 and Ser-150 each act as charge relay system in the active site. Catalysis depends on Ser-174, which acts as the Acyl-ester intermediate.

It belongs to the amidase family. GatA subfamily. As to quaternary structure, heterotrimer of A, B and C subunits.

It carries out the reaction L-glutamyl-tRNA(Gln) + L-glutamine + ATP + H2O = L-glutaminyl-tRNA(Gln) + L-glutamate + ADP + phosphate + H(+). In terms of biological role, allows the formation of correctly charged Gln-tRNA(Gln) through the transamidation of misacylated Glu-tRNA(Gln) in organisms which lack glutaminyl-tRNA synthetase. The reaction takes place in the presence of glutamine and ATP through an activated gamma-phospho-Glu-tRNA(Gln). This chain is Glutamyl-tRNA(Gln) amidotransferase subunit A, found in Macrococcus caseolyticus (strain JCSC5402) (Macrococcoides caseolyticum).